A 401-amino-acid polypeptide reads, in one-letter code: MTAELQPEAGALLHTELMSLNVGPQHPSTHGVLRLVVDMDGEYVTRVEPHMGYLHTGFEKTMEHRTYQQNVTYAPRTDYLHSFSHELAYVLSVEKLLGAEVPERANVVRVILHELGRIHSHLVFVGTGLLDLGALTPFFYAFREKEACQDLFEAVCGYRMNQGYFRVGGLARDLPEGWTARVEAFLNQMERGVEEYTTLFAANPIFLDRAKGVGVIPADAALDLGLTGPNLRASGVPLDNRKDHPYCGFEDYDFNVISSPDGDSLARFNMRLLEFSESIKIIRQGLQKLRPGPIKDPNRKISLPPRHELETSMEAVIHHFKLVTEGFHPPLGEAYVPIESARGEVGYYVISDGGSMPYRVKIRAPSFVNLQALEYACVGVQFADLITILATIDPVLGDVDR.

Belongs to the complex I 49 kDa subunit family. As to quaternary structure, NDH-1 is composed of 15 different subunits. Subunits NuoB, C, D, E, F, and G constitute the peripheral sector of the complex.

It localises to the cell membrane. It carries out the reaction a quinone + NADH + 5 H(+)(in) = a quinol + NAD(+) + 4 H(+)(out). Its function is as follows. NDH-1 shuttles electrons from NADH, via FMN and iron-sulfur (Fe-S) centers, to quinones in the respiratory chain. The immediate electron acceptor for the enzyme in this species is believed to be a menaquinone. Couples the redox reaction to proton translocation (for every two electrons transferred, four hydrogen ions are translocated across the cytoplasmic membrane), and thus conserves the redox energy in a proton gradient. The sequence is that of NADH-quinone oxidoreductase subunit D from Deinococcus radiodurans (strain ATCC 13939 / DSM 20539 / JCM 16871 / CCUG 27074 / LMG 4051 / NBRC 15346 / NCIMB 9279 / VKM B-1422 / R1).